We begin with the raw amino-acid sequence, 440 residues long: Xylose isomerase (440 aa).

Catalysis depends on residues histidine 101 and aspartate 104. Mg(2+) contacts are provided by glutamate 232, glutamate 268, histidine 271, aspartate 296, aspartate 307, aspartate 309, and aspartate 339.

The protein belongs to the xylose isomerase family. As to quaternary structure, homotetramer. Mg(2+) serves as cofactor.

The protein localises to the cytoplasm. The enzyme catalyses alpha-D-xylose = alpha-D-xylulofuranose. In Salmonella paratyphi B (strain ATCC BAA-1250 / SPB7), this protein is Xylose isomerase.